Here is a 115-residue protein sequence, read N- to C-terminus: NADH-ubiquinone oxidoreductase chain 3 (115 aa).

Transmembrane regions (helical) follow at residues 3–23, 55–75, and 84–104; these read LLMA…IAFW, FFLV…LLPL, and LSAM…GLMY.

The protein belongs to the complex I subunit 3 family. Core subunit of respiratory chain NADH dehydrogenase (Complex I) which is composed of 45 different subunits. Interacts with TMEM186. Interacts with TMEM242.

The protein resides in the mitochondrion inner membrane. The catalysed reaction is a ubiquinone + NADH + 5 H(+)(in) = a ubiquinol + NAD(+) + 4 H(+)(out). Its function is as follows. Core subunit of the mitochondrial membrane respiratory chain NADH dehydrogenase (Complex I) which catalyzes electron transfer from NADH through the respiratory chain, using ubiquinone as an electron acceptor. Essential for the catalytic activity of complex I. The protein is NADH-ubiquinone oxidoreductase chain 3 of Sigmodon ochrognathus (Yellow-nosed cotton rat).